Here is a 132-residue protein sequence, read N- to C-terminus: Vesicle transport protein GOT1A (132 aa).

Residues 1–9 (MISITEWQK) lie on the Cytoplasmic side of the membrane. The chain crosses the membrane as a helical span at residues 10–30 (IGVGITGFGIFFILFGTLLYF). A topological domain (lumenal) is located at residue Asp-31. Residues 32 to 52 (SVLLAFGNLLFLTGLSLIIGL) traverse the membrane as a helical segment. Over 53 to 68 (RKTFWFFFQRHKLKGT) the chain is Cytoplasmic. The helical transmembrane segment at 69–89 (SFLLGGVVIVLLRWPLLGMFL) threads the bilayer. The Lumenal portion of the chain corresponds to 90 to 100 (ETYGFFSLFKG). A helical transmembrane segment spans residues 101-121 (FFPVAFGFLGNVCNIPFLGAL). The Cytoplasmic portion of the chain corresponds to 122-132 (FRRLQGTSSMV).

This sequence belongs to the GOT1 family.

The protein localises to the golgi apparatus membrane. Functionally, may be involved in fusion of ER-derived transport vesicles with the Golgi complex. The chain is Vesicle transport protein GOT1A from Homo sapiens (Human).